Here is a 382-residue protein sequence, read N- to C-terminus: Lipid-A-disaccharide synthase (382 aa).

This sequence belongs to the LpxB family.

It carries out the reaction 2-N,3-O-bis[(3R)-3-hydroxytetradecanoyl]-alpha-D-glucosaminyl 1-phosphate + UDP-2-N,3-O-bis[(3R)-3-hydroxytetradecanoyl]-alpha-D-glucosamine = lipid A disaccharide (E. coli) + UDP + H(+). The catalysed reaction is a lipid X + a UDP-2-N,3-O-bis[(3R)-3-hydroxyacyl]-alpha-D-glucosamine = a lipid A disaccharide + UDP + H(+). It functions in the pathway glycolipid biosynthesis; lipid IV(A) biosynthesis; lipid IV(A) from (3R)-3-hydroxytetradecanoyl-[acyl-carrier-protein] and UDP-N-acetyl-alpha-D-glucosamine: step 5/6. In terms of biological role, condensation of UDP-2,3-diacylglucosamine and 2,3-diacylglucosamine-1-phosphate to form lipid A disaccharide, a precursor of lipid A, a phosphorylated glycolipid that anchors the lipopolysaccharide to the outer membrane of the cell. This is Lipid-A-disaccharide synthase from Shigella dysenteriae serotype 1 (strain Sd197).